We begin with the raw amino-acid sequence, 107 residues long: uncharacterized protein (107 aa).

4 consecutive transmembrane segments (helical) span residues 9-28 (FLVF…LIME), 33-50 (SYII…SLNI), 55-72 (LAIA…AIHV), and 77-99 (YRVI…YLKG).

It localises to the cell membrane. This is an uncharacterized protein from Archaeoglobus fulgidus (strain ATCC 49558 / DSM 4304 / JCM 9628 / NBRC 100126 / VC-16).